Consider the following 417-residue polypeptide: Imidazolonepropionase (417 aa).

Positions 77 and 79 each coordinate Fe(3+). Zn(2+) is bound by residues H77 and H79. 4-imidazolone-5-propanoate contacts are provided by R86, Y149, and H182. Residue Y149 coordinates N-formimidoyl-L-glutamate. H247 contributes to the Fe(3+) binding site. Residue H247 coordinates Zn(2+). Q250 contacts 4-imidazolone-5-propanoate. Residue D322 participates in Fe(3+) binding. D322 is a Zn(2+) binding site. Residues N324 and G326 each coordinate N-formimidoyl-L-glutamate. T327 serves as a coordination point for 4-imidazolone-5-propanoate.

The protein belongs to the metallo-dependent hydrolases superfamily. HutI family. Zn(2+) serves as cofactor. Fe(3+) is required as a cofactor.

Its subcellular location is the cytoplasm. It carries out the reaction 4-imidazolone-5-propanoate + H2O = N-formimidoyl-L-glutamate. It functions in the pathway amino-acid degradation; L-histidine degradation into L-glutamate; N-formimidoyl-L-glutamate from L-histidine: step 3/3. In terms of biological role, catalyzes the hydrolytic cleavage of the carbon-nitrogen bond in imidazolone-5-propanoate to yield N-formimidoyl-L-glutamate. It is the third step in the universal histidine degradation pathway. The chain is Imidazolonepropionase from Cupriavidus taiwanensis (strain DSM 17343 / BCRC 17206 / CCUG 44338 / CIP 107171 / LMG 19424 / R1) (Ralstonia taiwanensis (strain LMG 19424)).